Reading from the N-terminus, the 698-residue chain is Na(+)/H(+) antiporter NhaS5 (698 aa).

A run of 12 helical transmembrane segments spans residues 10–30, 35–55, 65–85, 100–120, 121–141, 156–176, 184–204, 222–242, 275–295, 300–320, 333–353, and 370–390; these read SNPL…PPIF, LPGL…GLGV, LFTD…IDMV, LTFA…GYSF, NASV…YPIV, IGAT…CISI, AGLV…LIGF, QFLF…LINV, LFIP…AFLV, LFPL…VAAI, GLTM…AAVA, and VLNT…LMTA.

It belongs to the monovalent cation:proton antiporter 2 (CPA2) transporter (TC 2.A.37) family.

The protein resides in the membrane. In terms of biological role, na(+)/H(+) antiporter. The sequence is that of Na(+)/H(+) antiporter NhaS5 (nhaS5) from Synechocystis sp. (strain ATCC 27184 / PCC 6803 / Kazusa).